A 464-amino-acid chain; its full sequence is Zinc transporter 6-A (464 aa).

Residues 1-33 (MGTIYLFRKTQRSLLGKLAQEFRLVTADRRSWK) are Cytoplasmic-facing. A helical transmembrane segment spans residues 34–54 (ILLFGAINVVCTAFLLTWCSS). The Extracellular portion of the chain corresponds to 55-64 (TNSMALTAYT). The chain crosses the membrane as a helical span at residues 65 to 85 (YLTIFDLFSLITSLISYWVTM). Residues 86–98 (KKPSPTYSFGFER) lie on the Cytoplasmic side of the membrane. The chain crosses the membrane as a helical span at residues 99–119 (FEVLAVFASTVLAQLGALFIL). Over 120 to 134 (KESAERFIEQPEIHT) the chain is Extracellular. A helical membrane pass occupies residues 135 to 155 (GRLLVGTFVALFFNLFTMLSI). Over 156–200 (RNKPFAYVSDAASTSWLQEHVADLSRSLCGIIPGLSSIFLPRMNP) the chain is Cytoplasmic. The chain crosses the membrane as a helical span at residues 201-221 (FVLIDIAGALALCITYMLIEI). Residues 222–223 (NN) lie on the Extracellular side of the membrane. A helical membrane pass occupies residues 224 to 244 (YFAVDTASAVAIAVMTFGTMY). Topologically, residues 245–464 (PMSVYSGKVL…TPGQFTQFRQ (220 aa)) are cytoplasmic.

It belongs to the cation diffusion facilitator (CDF) transporter (TC 2.A.4) family. SLC30A subfamily. In terms of assembly, heterodimer with SLC30A5; form a functional zinc ion transmembrane transporter.

The protein localises to the golgi apparatus. It localises to the trans-Golgi network membrane. Has probably no intrinsic transporter activity but together with SLC30A5 forms a functional zinc ion:proton antiporter heterodimer, mediating zinc entry into the lumen of organelles along the secretory pathway. As part of that zinc ion:proton antiporter, contributes to zinc ion homeostasis within the early secretory pathway and regulates the activation and folding of enzymes like alkaline phosphatases and enzymes involved in phosphatidylinositol glycan anchor biosynthesis. The sequence is that of Zinc transporter 6-A (slc30a6-a) from Xenopus laevis (African clawed frog).